A 402-amino-acid polypeptide reads, in one-letter code: Major outer membrane porin (402 aa).

The N-terminal stretch at 1 to 22 (MKKLLKSALLFAATGSALSLQA) is a signal peptide.

The protein belongs to the chlamydial porin (CP) (TC 1.B.2) family. Part of a disulfide cross-linked outer membrane complex (COMC) composed of the major outer membrane porin, the small cysteine-rich protein (OmcA) and the large cysteine-rich periplasmic protein (OmcB).

It is found in the cell outer membrane. In terms of biological role, in elementary bodies (EBs, the infectious stage, which is able to survive outside the host cell) provides the structural integrity of the outer envelope through disulfide cross-links with the small cysteine-rich protein and the large cysteine-rich periplasmic protein. It has been described in publications as the Sarkosyl-insoluble COMC (Chlamydia outer membrane complex), and serves as the functional equivalent of peptidoglycan. Permits diffusion of specific solutes through the outer membrane. This is Major outer membrane porin (ompA) from Chlamydia psittaci (Chlamydophila psittaci).